The chain runs to 1409 residues: DNA-directed RNA polymerase subunit beta' (1409 aa).

The Zn(2+) site is built by Cys-70, Cys-72, Cys-85, and Cys-88. The Mg(2+) site is built by Asp-460, Asp-462, and Asp-464. Residues Cys-822, Cys-896, Cys-903, and Cys-906 each coordinate Zn(2+).

The protein belongs to the RNA polymerase beta' chain family. The RNAP catalytic core consists of 2 alpha, 1 beta, 1 beta' and 1 omega subunit. When a sigma factor is associated with the core the holoenzyme is formed, which can initiate transcription. It depends on Mg(2+) as a cofactor. Zn(2+) is required as a cofactor.

It carries out the reaction RNA(n) + a ribonucleoside 5'-triphosphate = RNA(n+1) + diphosphate. DNA-dependent RNA polymerase catalyzes the transcription of DNA into RNA using the four ribonucleoside triphosphates as substrates. The sequence is that of DNA-directed RNA polymerase subunit beta' from Methylobacillus flagellatus (strain ATCC 51484 / DSM 6875 / VKM B-1610 / KT).